We begin with the raw amino-acid sequence, 258 residues long: Sec-independent protein translocase protein TatC (258 aa).

At 2-23 (SVEDTQPLITHLIELRKRLLNC) the chain is on the cytoplasmic side. The helical transmembrane segment at 24 to 44 (IIAVIVIFLCLVYFANDIYHL) threads the bilayer. At 45 to 75 (VSAPLIKQLPQGSTMIATDVASPFFTPIKLT) the chain is on the periplasmic side. Residues 76 to 96 (FMVSLILSAPVILYQVWAFIA) traverse the membrane as a helical segment. Topologically, residues 97–115 (PALYKHERRLVVPLLVSSS) are cytoplasmic. Residues 116 to 136 (LLFYIGMAFAYFVVFPLAFGF) traverse the membrane as a helical segment. At 137–156 (LANTAPEGVQVSTDIASYLS) the chain is on the periplasmic side. Residues 157–177 (FVMALFMAFGVSFEVPVAIVL) traverse the membrane as a helical segment. Residues 178–192 (LCWMGITSPEDLRKK) lie on the Cytoplasmic side of the membrane. The helical transmembrane segment at 193–210 (RPYVLVGAFVVGMLLTPP) threads the bilayer. Residue D211 is a topological domain, periplasmic. Residues 212–232 (VFSQTLLAIPMYCLFEIGVFF) form a helical membrane-spanning segment. Residues 233-258 (SRFYVGKGRNREEENDAEAESEKTEE) are Cytoplasmic-facing.

It belongs to the TatC family. As to quaternary structure, the Tat system comprises two distinct complexes: a TatABC complex, containing multiple copies of TatA, TatB and TatC subunits, and a separate TatA complex, containing only TatA subunits. Substrates initially bind to the TatABC complex, which probably triggers association of the separate TatA complex to form the active translocon. TatC can form a distinct, stable, multimeric complex independent of TatA and TatB. Each of TatA, TatB and TatC are able to interact in pairs without the third partner. Interacts with the signal sequence of DmsA and DmsD.

The protein localises to the cell inner membrane. Part of the twin-arginine translocation (Tat) system that transports large folded proteins containing a characteristic twin-arginine motif in their signal peptide across membranes. Together with TatB, TatC is part of a receptor directly interacting with Tat signal peptides. In Escherichia coli (strain K12), this protein is Sec-independent protein translocase protein TatC.